The chain runs to 1078 residues: Exportin-1 (1078 aa).

The Importin N-terminal domain maps to 34–100; that stretch reads AQQVLTQFQA…RNYIVAVMIK (67 aa).

It belongs to the exportin family. Interacts with php4.

Its subcellular location is the nucleus. Its function is as follows. Receptor for the leucine-rich nuclear export signal (NES). The protein is Exportin-1 (xpo1) of Schizosaccharomyces pombe (strain 972 / ATCC 24843) (Fission yeast).